A 357-amino-acid polypeptide reads, in one-letter code: Arginine kinase Pro c 2.0101 (357 aa).

One can recognise a Phosphagen kinase N-terminal domain in the interval 9-91 (KLEEGFKKLE…FDPIIEDYHK (83 aa)). 64 to 68 (GVGIY) lines the L-arginine pocket. The region spanning 119–356 (FVISTRVRCG…LELIKIEKEM (238 aa)) is the Phosphagen kinase C-terminal domain. Residues 122–126 (STRVR) and histidine 185 each bind ATP. Residue glutamate 225 coordinates L-arginine. ATP is bound at residue arginine 229. Cysteine 271 lines the L-arginine pocket. Residues 280-284 (RASVH) and 309-314 (RGTRGE) each bind ATP. Position 314 (glutamate 314) interacts with L-arginine.

Belongs to the ATP:guanido phosphotransferase family. Glycosylated. Muscle (at protein level).

The catalysed reaction is L-arginine + ATP = N(omega)-phospho-L-arginine + ADP + H(+). Catalyzes the reversible transfer of high energy ATP gamma-phosphate group to L-arginine. In Procambarus clarkii (Red swamp crayfish), this protein is Arginine kinase Pro c 2.0101.